A 253-amino-acid polypeptide reads, in one-letter code: Chromosome-partitioning ATPase Soj (253 aa).

ATP-binding residues include Lys-11, Gly-12, Gly-13, Val-14, Gly-15, Lys-16, Thr-17, Thr-18, Pro-211, and Asn-213. Thr-17 serves as a coordination point for Mg(2+).

Belongs to the ParA family.

It carries out the reaction ATP + H2O = ADP + phosphate + H(+). In terms of biological role, ATPase probably involved in chromosome partitioning. Cooperatively binds dsDNA, forming nucleoprotein filaments in a strictly ATP-dependent fashion. In Treponema pallidum (strain Nichols), this protein is Chromosome-partitioning ATPase Soj.